The following is a 367-amino-acid chain: Serine/threonine-protein kinase-transforming protein Rmil (367 aa).

The tract at residues 1–64 is disordered; that stretch reads EGGSTAGLSA…DSSDDWEIPD (64 aa). Over residues 33–57 the composition is skewed to basic and acidic residues; that stretch reads QRERKSSSSSEDRNRMKTLGRRDSS. A Protein kinase domain is found at 67–327; it reads ITVGQRIGSG…PQILASIELL (261 aa). Residues 73–81 and Lys93 each bind ATP; that span reads IGSGSFGTV. Catalysis depends on Asp186, which acts as the Proton acceptor.

It belongs to the protein kinase superfamily. TKL Ser/Thr protein kinase family. RAF subfamily.

The catalysed reaction is L-seryl-[protein] + ATP = O-phospho-L-seryl-[protein] + ADP + H(+). The enzyme catalyses L-threonyl-[protein] + ATP = O-phospho-L-threonyl-[protein] + ADP + H(+). The polypeptide is Serine/threonine-protein kinase-transforming protein Rmil (V-RMIL) (Avian retrovirus IC10).